Reading from the N-terminus, the 406-residue chain is MAMKSQKAKPISNKSKLERSPIEMEVVSHLKQLQGEHAIAVGLSGGVDSSLTAALLVEAGWKVEGLTLWLMEGKGSCCTEGLVDAAGICEQLKIPHHVVDERSTFQKEVVENLVNGYQEGITPLPCSRCNRFVKFSPMINWARKNRNLKRIATGHYARIKHAETNKLNSLDERKNRHQLLRGIDQNKDQSYFLYDLSQEILGHVVFPLGALTKSFTRKEANRYGLRTANKKESQDLCLAEKHGSMKAFLNNYLPPRKGEIVLTDGLVVGEHDGIEHFTIGQRKGLGIAWKEPLHVINIQPSLNRVIVGPRDQSGRSNCTVGEVNWVSISAPMQERLVEVQVRYRSDPVKAKLVPIEPTIKDIKNNRPHRCRIEFENPQFSISPGQAAVFYKGEVVLGGGIIQPFEY.

Residues 42–49 and Leu68 contribute to the ATP site; that span reads GLSGGVDS. Cys129 acts as the Nucleophile in catalysis. Cysteines 129 and 237 form a disulfide. Gly154 contributes to the ATP binding site. Residues 187-189 form an interaction with tRNA region; it reads KDQ. Cys237 serves as the catalytic Cysteine persulfide intermediate. The interval 342 to 343 is interaction with tRNA; the sequence is RY.

This sequence belongs to the MnmA/TRMU family.

It is found in the cytoplasm. It carries out the reaction S-sulfanyl-L-cysteinyl-[protein] + uridine(34) in tRNA + AH2 + ATP = 2-thiouridine(34) in tRNA + L-cysteinyl-[protein] + A + AMP + diphosphate + H(+). Its function is as follows. Catalyzes the 2-thiolation of uridine at the wobble position (U34) of tRNA, leading to the formation of s(2)U34. This chain is tRNA-specific 2-thiouridylase MnmA, found in Prochlorococcus marinus (strain MIT 9211).